A 139-amino-acid chain; its full sequence is Actin-depolymerizing factor 1 (139 aa).

The region spanning 5 to 139 (SSGLAVNDEC…SLDIVRSRTN (135 aa)) is the ADF-H domain.

This sequence belongs to the actin-binding proteins ADF family. In terms of tissue distribution, expressed in pollen.

Its function is as follows. Actin-depolymerizing protein. Severs actin filaments (F-actin) and binds to actin monomers. The chain is Actin-depolymerizing factor 1 (ADF1) from Zea mays (Maize).